We begin with the raw amino-acid sequence, 349 residues long: N-formyl peptide receptor 3 (349 aa).

The Extracellular segment spans residues 1 to 27; it reads METNFSIPLNETEEVLPEPAGHTVLWI. 2 N-linked (GlcNAc...) asparagine glycosylation sites follow: N4 and N10. The helical transmembrane segment at 28-50 threads the bilayer; it reads FSLLVHGVTFVFGVLGNGLVIWV. Topologically, residues 51–61 are cytoplasmic; the sequence is AGFRMTRTVNT. The helical transmembrane segment at 62–83 threads the bilayer; sequence ICYLNLALADFSFSAILPFRMV. Topologically, residues 84 to 100 are extracellular; it reads SVAMREKWPFGSFLCKL. A disulfide bridge links C98 with C176. Residues 101-121 form a helical membrane-spanning segment; sequence VHVMIDINLFVSVYLITIIAL. Residues 122 to 140 are Cytoplasmic-facing; the sequence is DRCICVLHPAWAQNHRTMS. Residues 141–162 traverse the membrane as a helical segment; that stretch reads LAKRVMTGLWILTIVLTLPNFI. Residues 163–205 lie on the Extracellular side of the membrane; that stretch reads FWTTIRTTNGDTYCIFNFAFWGDTAVERLNVFITMAKVFLILH. The chain crosses the membrane as a helical span at residues 206-226; the sequence is FIIGFSMPMSIITVCYGIIAA. Residues 227 to 242 lie on the Cytoplasmic side of the membrane; the sequence is KIHRNHMIKSSRPLRV. A helical membrane pass occupies residues 243–266; sequence FAAVVASFFICWFPYELIGILMAV. Residues 267–286 lie on the Extracellular side of the membrane; it reads WLKEMLLNGKYKIILVLINP. A helical transmembrane segment spans residues 287-306; it reads TSSLAFFNSCLNPILYVFMG. Over 307–349 the chain is Cytoplasmic; that stretch reads RNFQERLIRSLPTSLERALTEVPDSAQTSNTHTTSASPPEETE. The tract at residues 327-349 is disordered; the sequence is EVPDSAQTSNTHTTSASPPEETE. Residues 331–343 are compositionally biased toward polar residues; sequence SAQTSNTHTTSAS.

The protein belongs to the G-protein coupled receptor 1 family.

It localises to the cell membrane. In terms of biological role, low affinity receptor for N-formyl-methionyl peptides, which are powerful neutrophils chemotactic factors. Binding of FMLP to the receptor causes activation of neutrophils. This response is mediated via a G-protein that activates a phosphatidylinositol-calcium second messenger system. This Pan troglodytes (Chimpanzee) protein is N-formyl peptide receptor 3 (FPR3).